The primary structure comprises 352 residues: Heavy metal-associated isoprenylated plant protein 36 (352 aa).

Positions 29-92 (YTTWVLRVSI…KIMKAGRHAE (64 aa)) constitute an HMA domain. A metal cation is bound by residues cysteine 40 and cysteine 43. 3 disordered regions span residues 96-150 (TSME…GNFD), 162-211 (QLQP…GPPE), and 229-252 (PHLH…RHHP). Residues 97–107 (SMENNINNDCN) are compositionally biased toward polar residues. Positions 118–128 (ETSGDEDDDEN) are enriched in acidic residues. A compositionally biased stretch (gly residues) spans 133-148 (NGGGDVGGGGGGGGGN). A compositionally biased stretch (basic residues) spans 172–183 (KKKKKKKKKKKS). Residues 192–203 (EGGGGGGGGGGP) show a composition bias toward gly residues. Cysteine 349 carries the cysteine methyl ester modification. The S-farnesyl cysteine moiety is linked to residue cysteine 349. A propeptide spans 350–352 (CVM) (removed in mature form).

Belongs to the HIPP family.

Functionally, heavy-metal-binding protein. In Arabidopsis thaliana (Mouse-ear cress), this protein is Heavy metal-associated isoprenylated plant protein 36.